Consider the following 138-residue polypeptide: MLQSNRLAIYAIGKIKKLWIRDGINQYKKRMPELIINELKTFNLNNLRSNNNIIICLSEEGKQFNSVELCSLLLNFKNKKINFLIGDTDGISSDIKKNSDLILSLSPLTFPHELARLILIEQIYRAISISNNSPYHRS.

S-adenosyl-L-methionine contacts are provided by residues Leu57, Gly86, and 105-110; that span reads LSPLTF.

The protein belongs to the RNA methyltransferase RlmH family. As to quaternary structure, homodimer.

The protein resides in the cytoplasm. It carries out the reaction pseudouridine(1915) in 23S rRNA + S-adenosyl-L-methionine = N(3)-methylpseudouridine(1915) in 23S rRNA + S-adenosyl-L-homocysteine + H(+). Functionally, specifically methylates the pseudouridine at position 1915 (m3Psi1915) in 23S rRNA. The sequence is that of Ribosomal RNA large subunit methyltransferase H from Prochlorococcus marinus (strain MIT 9312).